A 320-amino-acid polypeptide reads, in one-letter code: Rhomboid-like protein 17, chloroplastic (320 aa).

The transit peptide at 1 to 87 (MHAIFSSFSR…LKFGNVMESR (87 aa)) directs the protein to the chloroplast. Transmembrane regions (helical) follow at residues 116-136 (WINGANGVVFGLVIANAAVFT), 160-180 (LITSGFSHIGTSQIILNMIGI), 199-219 (LYFAGALGGSVCFLSYHALLA), 247-267 (MFAIALLDMFIYPKVTTYFAL), and 295-315 (IASSSGQLGGVVVAAMAWARI).

The protein belongs to the peptidase S54 family.

The protein localises to the plastid. It is found in the chloroplast membrane. In terms of biological role, probable rhomboid-type serine protease that catalyzes intramembrane proteolysis. The protein is Rhomboid-like protein 17, chloroplastic of Arabidopsis thaliana (Mouse-ear cress).